A 213-amino-acid polypeptide reads, in one-letter code: Probable GTP-binding protein EngB (213 aa).

The EngB-type G domain maps to 30–204 (SVQSIAFMGR…REFILETLGI (175 aa)). GTP contacts are provided by residues 38-45 (GRSNSGKS), 65-69 (GKTKL), 83-86 (DLPG), 150-153 (TKID), and 183-185 (ISA). Residues Ser-45 and Thr-67 each contribute to the Mg(2+) site.

Belongs to the TRAFAC class TrmE-Era-EngA-EngB-Septin-like GTPase superfamily. EngB GTPase family. Requires Mg(2+) as cofactor.

Functionally, necessary for normal cell division and for the maintenance of normal septation. This Leptospira biflexa serovar Patoc (strain Patoc 1 / Ames) protein is Probable GTP-binding protein EngB.